Consider the following 89-residue polypeptide: Probable Fe(2+)-trafficking protein (89 aa).

The protein belongs to the Fe(2+)-trafficking protein family.

Functionally, could be a mediator in iron transactions between iron acquisition and iron-requiring processes, such as synthesis and/or repair of Fe-S clusters in biosynthetic enzymes. This Acinetobacter baumannii (strain SDF) protein is Probable Fe(2+)-trafficking protein.